A 102-amino-acid polypeptide reads, in one-letter code: Small ribosomal subunit protein uS10 (102 aa).

Belongs to the universal ribosomal protein uS10 family. Part of the 30S ribosomal subunit.

Involved in the binding of tRNA to the ribosomes. The chain is Small ribosomal subunit protein uS10 from Leptospira borgpetersenii serovar Hardjo-bovis (strain JB197).